The chain runs to 479 residues: (R)-1-hydroxy-2-aminoethylphosphonate ammonia-lyase (479 aa).

N6-(pyridoxal phosphate)lysine is present on Lys-317.

This sequence belongs to the class-III pyridoxal-phosphate-dependent aminotransferase family. It depends on pyridoxal 5'-phosphate as a cofactor.

It carries out the reaction (1R)-(2-amino-1-hydroxyethyl)phosphonate = phosphonoacetaldehyde + NH4(+). In terms of biological role, involved in phosphonate degradation. Functions as a lyase that catalyzes an elimination reaction on the naturally occurring compound (R)-1-hydroxy-2-aminoethylphosphonate ((R)-HAEP), releasing ammonia and generating phosphonoacetaldehyde (PAA), which can be then hydrolyzed by PhnX, encoded by an adjacent gene. Thus, catalyzes a reaction that serves to funnel (R)-HAEP into the hydrolytic pathway for aminoethylphosphonate (AEP, the most common biogenic phosphonate) degradation, expanding the scope and the usefulness of the pathway itself. Is not active toward the (S) enantiomer of HAEP or other HAEP-related compounds such as ethanolamine and D,L-isoserine, indicating a very high substrate specificity. The sequence is that of (R)-1-hydroxy-2-aminoethylphosphonate ammonia-lyase from Vibrio splendidus (strain 12B01).